Reading from the N-terminus, the 453-residue chain is Bifunctional protein GlmU (453 aa).

A pyrophosphorylase region spans residues 1 to 225 (MNIVILAAGT…EWETLGVNSK (225 aa)). UDP-N-acetyl-alpha-D-glucosamine-binding positions include 6-9 (LAAG), lysine 20, glutamine 71, 76-77 (GT), 98-100 (YGD), glycine 135, glutamate 150, asparagine 165, and asparagine 223. Aspartate 100 is a Mg(2+) binding site. Asparagine 223 is a binding site for Mg(2+). Residues 226 to 246 (AQLAELERIHQRNVADALLVD) form a linker region. The segment at 247-453 (GVTLADPARV…GYVRPVKKKS (207 aa)) is N-acetyltransferase. UDP-N-acetyl-alpha-D-glucosamine is bound by residues arginine 329 and lysine 347. Histidine 359 (proton acceptor) is an active-site residue. UDP-N-acetyl-alpha-D-glucosamine-binding residues include tyrosine 362 and asparagine 373. Acetyl-CoA is bound by residues alanine 376, 382–383 (NY), serine 401, and alanine 419.

In the N-terminal section; belongs to the N-acetylglucosamine-1-phosphate uridyltransferase family. It in the C-terminal section; belongs to the transferase hexapeptide repeat family. As to quaternary structure, homotrimer. It depends on Mg(2+) as a cofactor.

Its subcellular location is the cytoplasm. The catalysed reaction is alpha-D-glucosamine 1-phosphate + acetyl-CoA = N-acetyl-alpha-D-glucosamine 1-phosphate + CoA + H(+). It carries out the reaction N-acetyl-alpha-D-glucosamine 1-phosphate + UTP + H(+) = UDP-N-acetyl-alpha-D-glucosamine + diphosphate. Its pathway is nucleotide-sugar biosynthesis; UDP-N-acetyl-alpha-D-glucosamine biosynthesis; N-acetyl-alpha-D-glucosamine 1-phosphate from alpha-D-glucosamine 6-phosphate (route II): step 2/2. The protein operates within nucleotide-sugar biosynthesis; UDP-N-acetyl-alpha-D-glucosamine biosynthesis; UDP-N-acetyl-alpha-D-glucosamine from N-acetyl-alpha-D-glucosamine 1-phosphate: step 1/1. It participates in bacterial outer membrane biogenesis; LPS lipid A biosynthesis. Catalyzes the last two sequential reactions in the de novo biosynthetic pathway for UDP-N-acetylglucosamine (UDP-GlcNAc). The C-terminal domain catalyzes the transfer of acetyl group from acetyl coenzyme A to glucosamine-1-phosphate (GlcN-1-P) to produce N-acetylglucosamine-1-phosphate (GlcNAc-1-P), which is converted into UDP-GlcNAc by the transfer of uridine 5-monophosphate (from uridine 5-triphosphate), a reaction catalyzed by the N-terminal domain. The sequence is that of Bifunctional protein GlmU from Burkholderia orbicola (strain MC0-3).